We begin with the raw amino-acid sequence, 160 residues long: Keratin-associated protein 13-4 (160 aa).

A run of 4 repeats spans residues 41–50 (CQLGSSLYRD), 51–60 (CQKTCWEPAS), 61–70 (CQKSCYHPRT), and 77–86 (CQTTCSGSLG). Positions 41–86 (CQLGSSLYRDCQKTCWEPASCQKSCYHPRTSMLCCPCQTTCSGSLG) are 4 X 10 AA approximate repeats.

The protein belongs to the PMG family. In terms of assembly, interacts with hair keratins.

Its function is as follows. In the hair cortex, hair keratin intermediate filaments are embedded in an interfilamentous matrix, consisting of hair keratin-associated proteins (KRTAP), which are essential for the formation of a rigid and resistant hair shaft through their extensive disulfide bond cross-linking with abundant cysteine residues of hair keratins. The matrix proteins include the high-sulfur and high-glycine-tyrosine keratins. This is Keratin-associated protein 13-4 (KRTAP13-4) from Hylobates agilis (Agile gibbon).